A 128-amino-acid polypeptide reads, in one-letter code: 3-aminoacrylate deaminase RutC (128 aa).

The protein belongs to the RutC family.

It catalyses the reaction (Z)-3-aminoacrylate + H2O + H(+) = 3-oxopropanoate + NH4(+). In terms of biological role, involved in pyrimidine catabolism. Catalyzes the deamination of 3-aminoacrylate to malonic semialdehyde, a reaction that can also occur spontaneously. RutC may facilitate the reaction and modulate the metabolic fitness, rather than catalyzing essential functions. The polypeptide is 3-aminoacrylate deaminase RutC (Enterobacter cloacae subsp. cloacae (strain ATCC 13047 / DSM 30054 / NBRC 13535 / NCTC 10005 / WDCM 00083 / NCDC 279-56)).